We begin with the raw amino-acid sequence, 245 residues long: Biosynthetic peptidoglycan transglycosylase (245 aa).

The helical transmembrane segment at 19-39 threads the bilayer; sequence IVYAGAVFAAAWLATQLFYFV.

Belongs to the glycosyltransferase 51 family.

It localises to the cell inner membrane. It carries out the reaction [GlcNAc-(1-&gt;4)-Mur2Ac(oyl-L-Ala-gamma-D-Glu-L-Lys-D-Ala-D-Ala)](n)-di-trans,octa-cis-undecaprenyl diphosphate + beta-D-GlcNAc-(1-&gt;4)-Mur2Ac(oyl-L-Ala-gamma-D-Glu-L-Lys-D-Ala-D-Ala)-di-trans,octa-cis-undecaprenyl diphosphate = [GlcNAc-(1-&gt;4)-Mur2Ac(oyl-L-Ala-gamma-D-Glu-L-Lys-D-Ala-D-Ala)](n+1)-di-trans,octa-cis-undecaprenyl diphosphate + di-trans,octa-cis-undecaprenyl diphosphate + H(+). The protein operates within cell wall biogenesis; peptidoglycan biosynthesis. Functionally, peptidoglycan polymerase that catalyzes glycan chain elongation from lipid-linked precursors. In Burkholderia multivorans (strain ATCC 17616 / 249), this protein is Biosynthetic peptidoglycan transglycosylase.